The chain runs to 368 residues: Trans-enoyl reductase thnE (368 aa).

53–56 (VDVK) is a binding site for NADP(+). Substrate is bound at residue 140-147 (LATATAAY). NADP(+)-binding positions include 179–182 (STAT), 202–205 (SPSN), Tyr-220, and 267–268 (VE). A substrate-binding site is contributed by 289–293 (VMTVW). Residue 358–359 (PS) coordinates NADP(+).

It belongs to the zinc-containing alcohol dehydrogenase family. As to quaternary structure, monomer.

The catalysed reaction is malate + 6 malonyl-CoA + acetyl-CoA + 2 AH2 + 2 S-adenosyl-L-methionine + 5 NADPH + 9 H(+) = trihazone A + 2 A + 2 S-adenosyl-L-homocysteine + 6 CO2 + 5 NADP(+) + 7 CoA + 6 H2O. It participates in secondary metabolite biosynthesis. Functionally, trans-enoyl reductase; part of the gene cluster that produces the tetronate natural products trihazones. The PKS-NRPS synthetase thnA with the help of the trans-enoyl reductase thnE are responsible for the synthesis of the carboxylmethyl containing trihazone A. The PKS portion of thnA synthesizes beta-keto-triene chain from one acetyl-CoA and 6 equivalents of malonyl-CoA, in collaboration with thnE, which selectively reduces the enoyl intermediate during the first and fourth iteration of the PKS. The NRPS domain selects and activates malate, of which the alpha-hydroxyl group attacks the completed polyketide acyl-S-ACP chain to form the ester product. Intramolecular Dieckmann cyclization catalyzed by the terminal reductase domain releases the product as trihazone A from the PKS-NPRS. The pathway begins with the formation of trihazone A by the hybrid PKS-NRPS synthetase thnA and the trans-enoyl reductase thnE. Trihazone A is further decarboxylated by the 2-oxoglutarate-dependent dioxygenase thnC to produce trihazone D. The function of the FAD-dependent monooxygenase thnD has still to be identified. The sequence is that of Trans-enoyl reductase thnE from Trichoderma harzianum (Hypocrea lixii).